A 97-amino-acid chain; its full sequence is Large ribosomal subunit protein uL23 (97 aa).

The protein belongs to the universal ribosomal protein uL23 family. As to quaternary structure, part of the 50S ribosomal subunit. Contacts protein L29, and trigger factor when it is bound to the ribosome.

Functionally, one of the early assembly proteins it binds 23S rRNA. One of the proteins that surrounds the polypeptide exit tunnel on the outside of the ribosome. Forms the main docking site for trigger factor binding to the ribosome. This chain is Large ribosomal subunit protein uL23, found in Brucella melitensis biotype 2 (strain ATCC 23457).